The chain runs to 234 residues: Ribulose-phosphate 3-epimerase (234 aa).

Serine 7 is a binding site for substrate. A divalent metal cation contacts are provided by histidine 32, aspartate 34, and histidine 65. Aspartate 34 (proton acceptor) is an active-site residue. Residues histidine 65, 139–142 (GFSG), 172–174 (DGG), and 194–195 (AS) contribute to the substrate site. An a divalent metal cation-binding site is contributed by aspartate 172. Aspartate 172 acts as the Proton donor in catalysis.

It belongs to the ribulose-phosphate 3-epimerase family. A divalent metal cation serves as cofactor.

The enzyme catalyses D-ribulose 5-phosphate = D-xylulose 5-phosphate. Its pathway is carbohydrate degradation. Catalyzes the reversible epimerization of D-ribulose 5-phosphate to D-xylulose 5-phosphate. The polypeptide is Ribulose-phosphate 3-epimerase (Methanocaldococcus jannaschii (strain ATCC 43067 / DSM 2661 / JAL-1 / JCM 10045 / NBRC 100440) (Methanococcus jannaschii)).